The chain runs to 798 residues: ATP-dependent RNA helicase bel (798 aa).

The interval 16–248 (VAGLDLNGGS…SRWKEGGGSN (233 aa)) is disordered. Polar residues predominate over residues 31–42 (PITSKTSTNSVT). Composition is skewed to gly residues over residues 94–110 (RGGGGEYRRGGGGGGRG), 118–132 (YGYGSGGGGRRGGGG), and 154–178 (SGGGGGGGRGFGRGPSYRGGGGGSG). Residues S177 and S179 each carry the phosphoserine modification. Positions 198 to 209 (RNDRWQEPERPA) are enriched in basic and acidic residues. Phosphoserine occurs at positions 214 and 219. Positions 295 to 323 (TSFDDVQLTEIIRNNVALARYDKPTPVQK) match the Q motif motif. Residues 315–322 (YDKPTPVQ) and 339–346 (AQTGSGKT) contribute to the ATP site. The 190-residue stretch at 326-515 (IPIIINGRDL…SDFLSNYIFL (190 aa)) folds into the Helicase ATP-binding domain. Positions 459–462 (DEAD) match the DEAD box motif. The 152-residue stretch at 542–693 (YLLDLLSSIR…EIPSFMEDMS (152 aa)) folds into the Helicase C-terminal domain. The residue at position 638 (S638) is a Phosphoserine. 2 disordered regions span residues 689 to 765 (MEDM…SGGG) and 778 to 798 (GGSYGGGSASHSSNAPDWWAQ). 2 stretches are compositionally biased toward gly residues: residues 706–717 (RGGGGRYGGGFG) and 740–750 (GGSGSGGGGGS).

Belongs to the DEAD box helicase family. DDX3/DED1 subfamily. In terms of tissue distribution, vas and bel colocalize in nuage (perinuclear, electron-dense granules in germline cells) and at the oocyte posterior during oogenesis.

It localises to the cytoplasm. The enzyme catalyses ATP + H2O = ADP + phosphate + H(+). In terms of biological role, ATP-dependent RNA helicase that is essential and required for cellular function, larval growth, and for male and female fertility. Also required for RNA interference (RNAi), double-stranded RNA induces potent and specific gene silencing, by acting downstream of dsRNA internalization. RNAi is mediated by the RNA-induced silencing complex (RISC), a sequence-specific, multicomponent nuclease that destroys or silences messenger RNAs homologous to the silencing trigger. The sequence is that of ATP-dependent RNA helicase bel from Drosophila melanogaster (Fruit fly).